The primary structure comprises 406 residues: Serine hydroxymethyltransferase (406 aa).

(6S)-5,6,7,8-tetrahydrofolate-binding positions include leucine 111 and glycine 115–leucine 117. The residue at position 220 (lysine 220) is an N6-(pyridoxal phosphate)lysine.

Belongs to the SHMT family. As to quaternary structure, homodimer. Pyridoxal 5'-phosphate is required as a cofactor.

It is found in the cytoplasm. The catalysed reaction is (6R)-5,10-methylene-5,6,7,8-tetrahydrofolate + glycine + H2O = (6S)-5,6,7,8-tetrahydrofolate + L-serine. The protein operates within one-carbon metabolism; tetrahydrofolate interconversion. It participates in amino-acid biosynthesis; glycine biosynthesis; glycine from L-serine: step 1/1. In terms of biological role, catalyzes the reversible interconversion of serine and glycine with tetrahydrofolate (THF) serving as the one-carbon carrier. This reaction serves as the major source of one-carbon groups required for the biosynthesis of purines, thymidylate, methionine, and other important biomolecules. Also exhibits THF-independent aldolase activity toward beta-hydroxyamino acids, producing glycine and aldehydes, via a retro-aldol mechanism. In Mycoplasma pneumoniae (strain ATCC 29342 / M129 / Subtype 1) (Mycoplasmoides pneumoniae), this protein is Serine hydroxymethyltransferase.